Reading from the N-terminus, the 407-residue chain is Aspartokinase (407 aa).

7–10 provides a ligand contact to ATP; the sequence is KFGG. 25–30 contributes to the substrate binding site; that stretch reads RVIEEV. Residue Ser41 coordinates ATP. Residues 47-49, Glu74, 125-126, 150-153, and Ser153 each bind substrate; these read TDE, LD, and RGGS. ATP-binding positions include 173–174 and 179–184; these read TD and FTTDPR. ACT domains follow at residues 264-338 and 340-407; these read VTVV…LAKV and IVGS…AVRS. Residues 289–291, Gln295, 351–352, 365–366, and 372–373 each bind substrate; these read NVD, VA, EI, and SE.

It belongs to the aspartokinase family. In terms of assembly, tetramer consisting of 2 isoforms Alpha (catalytic and regulation) and of a homodimer of 2 isoforms Beta (regulation).

The enzyme catalyses L-aspartate + ATP = 4-phospho-L-aspartate + ADP. It participates in amino-acid biosynthesis; L-lysine biosynthesis via DAP pathway; (S)-tetrahydrodipicolinate from L-aspartate: step 1/4. It functions in the pathway amino-acid biosynthesis; L-methionine biosynthesis via de novo pathway; L-homoserine from L-aspartate: step 1/3. Its pathway is amino-acid biosynthesis; L-threonine biosynthesis; L-threonine from L-aspartate: step 1/5. Lysine-sensitive. Catalyzes the phosphorylation of the beta-carboxyl group of aspartic acid with ATP to yield 4-phospho-L-aspartate, which is involved in the branched biosynthetic pathway leading to the biosynthesis of amino acids threonine, isoleucine and methionine. This Geobacillus stearothermophilus (Bacillus stearothermophilus) protein is Aspartokinase (lysC).